The chain runs to 150 residues: UPF0178 protein BamMC406_1579 (150 aa).

It belongs to the UPF0178 family.

The protein is UPF0178 protein BamMC406_1579 of Burkholderia ambifaria (strain MC40-6).